A 478-amino-acid chain; its full sequence is Puromycin-sensitive aminopeptidase-like protein (478 aa).

Residues E180 and 316–320 (GAMEN) contribute to the substrate site. H352 is a binding site for Zn(2+). E353 acts as the Proton acceptor in catalysis. 2 residues coordinate Zn(2+): H356 and E375.

Belongs to the peptidase M1 family. The cofactor is Zn(2+).

In terms of biological role, aminopeptidase with broad substrate specificity to several peptides. In Homo sapiens (Human), this protein is Puromycin-sensitive aminopeptidase-like protein (NPEPPSL1).